The primary structure comprises 221 residues: Zingipain-2 (221 aa).

2 cysteine pairs are disulfide-bonded: cysteine 24/cysteine 65 and cysteine 58/cysteine 98. Residue cysteine 27 is part of the active site. Asparagine 99 and asparagine 156 each carry an N-linked (GlcNAc...) asparagine glycan. A disulfide bond links cysteine 155 and cysteine 206. Residue histidine 161 is part of the active site.

The protein belongs to the peptidase C1 family.

It carries out the reaction Preferential cleavage of peptides with a proline residue at the P2 position.. Functionally, cysteine proteinase with a specific activity toward peptides with a proline residue at the P2 position. This is Zingipain-2 from Zingiber officinale (Ginger).